The sequence spans 484 residues: MTLSQWQPSRKSDVPLHRQIEQYMKDKILHGEWAVGTKIPSQRTLADMFQVNRSTVTAAIDELTSQGLLEGRKGGGTKVVNSTWSVLTAEPPLDWSDYVRSGIHRANSSIIQAINQNEPRADIIRLGTGELSPDLVPADTIGRMFQQINPGVLSLGYEQPKGNRQLREAVADHLKGKKIHVSPSAILIVSGALQALQLISIGLLKRDSVILTEKPSYLQSLHVFQSAGMRLRGLPMDDEGVKAGLVSSNRKQYGGQLLYTIPSFHNPTGTVMSEQRRKEIISLSKKEQMPIIEDDAYGDLWFEEKPPQPLKAMDHEGNILYLGAFSKTVSPGLRIGWLAGPEPVIERLADIKMQTDYGSSGLSQWAAAEWLSQGYYEEHLTWVRRKLKERRDAAVHFLERYAGDIATWRIPAGGFYIWVTFHKNLPVSRFFYELLKRQVLVNPGYIYDGEDRNSIRLSYSYASLGDLETGIKAAAETARRLMMS.

An HTH gntR-type domain is found at valine 14–serine 82. A DNA-binding region (H-T-H motif) is located at residues glutamine 42–aspartate 61. Lysine 327 is subject to N6-(pyridoxal phosphate)lysine.

It in the C-terminal section; belongs to the class-I pyridoxal-phosphate-dependent aminotransferase family. Requires pyridoxal 5'-phosphate as cofactor.

This is an uncharacterized protein from Bacillus subtilis (strain 168).